A 303-amino-acid chain; its full sequence is ATP-dependent (S)-NAD(P)H-hydrate dehydratase (303 aa).

Positions 12-299 constitute a YjeF C-terminal domain; the sequence is QQQLVCSVIP…AEVRTAFSML (288 aa). (6S)-NADPHX is bound by residues G106 and 158–164; that span reads NAVELDR. Residues 194–198 and 213–222 contribute to the ATP site; these read KGSED and GSPRRCGGQG. D223 provides a ligand contact to (6S)-NADPHX.

This sequence belongs to the NnrD/CARKD family. The cofactor is Mg(2+).

It catalyses the reaction (6S)-NADHX + ATP = ADP + phosphate + NADH + H(+). The catalysed reaction is (6S)-NADPHX + ATP = ADP + phosphate + NADPH + H(+). Catalyzes the dehydration of the S-form of NAD(P)HX at the expense of ATP, which is converted to ADP. Together with NAD(P)HX epimerase, which catalyzes the epimerization of the S- and R-forms, the enzyme allows the repair of both epimers of NAD(P)HX, a damaged form of NAD(P)H that is a result of enzymatic or heat-dependent hydration. In Ixodes scapularis (Black-legged tick), this protein is ATP-dependent (S)-NAD(P)H-hydrate dehydratase.